The sequence spans 138 residues: uncharacterized protein (138 aa).

3 consecutive transmembrane segments (helical) span residues 17–37 (IVVS…TIYF), 43–63 (FTVV…LLVC), and 117–137 (FWWM…LVSL).

It is found in the cell membrane. This is an uncharacterized protein from Mycoplasma genitalium (strain ATCC 33530 / DSM 19775 / NCTC 10195 / G37) (Mycoplasmoides genitalium).